The following is a 407-amino-acid chain: Aurora kinase A-A (407 aa).

Over residues 1-10 the composition is skewed to basic and acidic residues; it reads MERAVKENHK. Positions 1 to 130 are disordered; it reads MERAVKENHK…KTSAVPKEEG (130 aa). Composition is skewed to polar residues over residues 67-77 and 84-110; these read ILSSQKPTTQI and QGHQ…STPN. Residues 140–390 form the Protein kinase domain; that stretch reads FEIGRPLGKG…LKGVLEHPWI (251 aa). Residues lysine 150, lysine 169, and 217–220 each bind ATP; that span reads LDYA. Catalysis depends on aspartate 263, which acts as the Proton acceptor. ATP is bound at residue aspartate 281. The activation segment stretch occupies residues 287–300; it reads HAPSSRRTTLCGTL.

Belongs to the protein kinase superfamily. Ser/Thr protein kinase family. Aurora subfamily. Interacts with kif2c and kif11. Post-translationally, phosphorylated. Autophosphorylated on a serine residue. Highly expressed in ovary and testis.

It is found in the cytoplasm. The protein localises to the cytoskeleton. Its subcellular location is the spindle. It localises to the microtubule organizing center. The protein resides in the centrosome. The enzyme catalyses L-seryl-[protein] + ATP = O-phospho-L-seryl-[protein] + ADP + H(+). It carries out the reaction L-threonyl-[protein] + ATP = O-phospho-L-threonyl-[protein] + ADP + H(+). Its function is as follows. Mitotic serine/threonine kinases that contributes to the regulation of cell cycle progression. Associates with the centrosome and the spindle microtubules during mitosis and plays a critical role in various mitotic events including the establishment of mitotic spindle, centrosome duplication, centrosome separation as well as maturation, chromosomal alignment, spindle assembly checkpoint, and cytokinesis. Phosphorylates numerous target proteins. Important for microtubule formation and/or stabilization. This is Aurora kinase A-A (aurka-a) from Xenopus laevis (African clawed frog).